We begin with the raw amino-acid sequence, 644 residues long: Exoribonuclease 2 (644 aa).

Residues 189-516 form the RNB domain; it reads RQDLTALNFV…NHRLLKAVIK (328 aa). The 83-residue stretch at 561–643 folds into the S1 motif domain; it reads NTRFAAEIID…ETRSIIARPA (83 aa).

It belongs to the RNR ribonuclease family. RNase II subfamily.

The protein localises to the cytoplasm. The enzyme catalyses Exonucleolytic cleavage in the 3'- to 5'-direction to yield nucleoside 5'-phosphates.. Functionally, involved in mRNA degradation. Hydrolyzes single-stranded polyribonucleotides processively in the 3' to 5' direction. The polypeptide is Exoribonuclease 2 (Salmonella paratyphi A (strain ATCC 9150 / SARB42)).